The following is a 201-amino-acid chain: Probable nicotinate-nucleotide adenylyltransferase (201 aa).

This sequence belongs to the NadD family.

It carries out the reaction nicotinate beta-D-ribonucleotide + ATP + H(+) = deamido-NAD(+) + diphosphate. It functions in the pathway cofactor biosynthesis; NAD(+) biosynthesis; deamido-NAD(+) from nicotinate D-ribonucleotide: step 1/1. In terms of biological role, catalyzes the reversible adenylation of nicotinate mononucleotide (NaMN) to nicotinic acid adenine dinucleotide (NaAD). In Clostridium botulinum (strain Loch Maree / Type A3), this protein is Probable nicotinate-nucleotide adenylyltransferase.